The primary structure comprises 117 residues: UPF0102 protein FTW_1281 (117 aa).

Belongs to the UPF0102 family.

This is UPF0102 protein FTW_1281 from Francisella tularensis subsp. tularensis (strain WY96-3418).